We begin with the raw amino-acid sequence, 250 residues long: MTRKLFVGGNWKMNGSYSHINTFFDTLQKADTDPNADIVIGVPACYLKYAQDKAPKGIKIAAENCYKVGSGAFTGEISTEMIKDCGCEWVILGHSERRHIFGESNELIGEKVKHALDSGLNVIPCIGELLSEREAGKTNDVCFAQMDAIAKNVPSKEAWDKVVIAYEPVWAIGTGKTATPAQAQEVHKVVRDWIRKHVDAGIADKVRILYGGSVTASNAKDLGTQPDVDGFLVGGASLKPDFITIINARR.

2 residues coordinate substrate: Asn-10 and Lys-12. Residue His-94 is the Electrophile of the active site. Glu-167 serves as the catalytic Proton acceptor.

It belongs to the triosephosphate isomerase family. Homodimer.

Its subcellular location is the cytoplasm. It carries out the reaction D-glyceraldehyde 3-phosphate = dihydroxyacetone phosphate. The protein operates within carbohydrate biosynthesis; gluconeogenesis. Its pathway is carbohydrate degradation; glycolysis; D-glyceraldehyde 3-phosphate from glycerone phosphate: step 1/1. The chain is Triosephosphate isomerase from Taenia solium (Pork tapeworm).